We begin with the raw amino-acid sequence, 495 residues long: Fusicoccadiene 8-ol C-16 hydroxylase (495 aa).

Residues 12 to 32 form a helical membrane-spanning segment; it reads VLLALIVWIGTTIIYNIYFHP. Asn-249 and Asn-317 each carry an N-linked (GlcNAc...) asparagine glycan. Cys-439 contacts heme.

This sequence belongs to the cytochrome P450 family. Heme is required as a cofactor.

Its subcellular location is the membrane. It functions in the pathway mycotoxin biosynthesis. Functionally, cytochrome P450 monooxygenase; part of the gene cluster that mediates the biosynthesis of the diterpene glucoside brassicicene C. In the first step of the brassicicene C biosynthesis, the bifunctional diterpene synthase bsc8 that possesses both prenyl transferase and terpene cyclase activity, converts isopentenyl diphosphate and dimethylallyl diphosphate into geranylgeranyl diphosphate (GGDP) that is further converted into fusicocca-2,10(14)-diene, the first precursor for brassicicene C. Fusicocca-2,10(14)-diene is then substrate of cytochrome P450 monooxygenase bsc1 for hydroxylation at the C-8 position. Oxidation at C-16 position to aldehyde is then catalyzed by the cytochrome P450 monooyxygenase bsc7, yielding fusicocca-2,10(14)-diene-8-beta,16-diol. Follows the isomerization of the double bond and reduction of aldehyde to alcohol catalyzed by the short-chain dehydrogenase/reductase bsc3 to yield the diol compound fusicocca-1,10(14)-diene-8 beta,16-diol. The next step is the oxidation at the C-3 position of fusicocca-2,10(14)-diene-8-beta,16-diol catalyzed by the alpha-ketoglutarate dependent dioxygenase bsc9, to produce a triol compound. Methylation of the hydroxy group at position 16 is performed by the methyltransferase bsc6. 16-O-methylation is followed by oxidation at the C-13 position to ketone and an alkyl shift of the methyl group leads to brassicicene C. Although the probable acetyltransferase bsc4 is included in the gene cluster, no acetylation reactions are necessary for brassicicene C biosynthesis. However, the fact that brassicicene E, which is a structurally related compound having an acetoxy group at position 12, was previously isolated from another strain of A.brassicicola suggests that the ATCC 96836 strain might also produce a small amount of brassicicene E. The polypeptide is Fusicoccadiene 8-ol C-16 hydroxylase (Alternaria brassicicola (Dark leaf spot agent)).